The primary structure comprises 313 residues: Beta-ribofuranosylphenol 5'-phosphate synthase (313 aa).

This sequence belongs to the beta-RFA-P synthase family. Homodimer.

The enzyme catalyses 5-phospho-alpha-D-ribose 1-diphosphate + 4-hydroxybenzoate + H(+) = 4-(beta-D-ribofuranosyl)phenol 5'-phosphate + CO2 + diphosphate. It carries out the reaction 4-aminobenzoate + 5-phospho-alpha-D-ribose 1-diphosphate + H(+) = 4-(beta-D-ribofuranosyl)aminobenzene 5'-phosphate + CO2 + diphosphate. It participates in cofactor biosynthesis; 5,6,7,8-tetrahydromethanopterin biosynthesis. Catalyzes the condensation of 4-hydroxybenzoate (HB) with 5-phospho-alpha-D-ribose 1-diphosphate (PRPP) to produce beta-ribofuranosylphenol 5'-phosphate (beta-RFH-P). Also catalyzes the condensation of 4-aminobenzoate (pABA) with PRPP to produce beta-ribofuranosylaminobenzene 5'-phosphate (beta-RFA-P). In Archaeoglobus fulgidus (strain ATCC 49558 / DSM 4304 / JCM 9628 / NBRC 100126 / VC-16), this protein is Beta-ribofuranosylphenol 5'-phosphate synthase.